The primary structure comprises 748 residues: Methylmalonyl-CoA mutase, mitochondrial (748 aa).

The transit peptide at 1–30 (MLRAKNQLFLLSPHYLKQLNIPSASRWKRL) directs the protein to the mitochondrion. Q48 serves as a coordination point for malonyl-CoA. K87 bears the N6-acetyllysine mark. Malonyl-CoA-binding positions include 94–97 (YPTM) and 104–108 (TIRQY). K210 carries the post-translational modification N6-acetyllysine. Malonyl-CoA is bound by residues 214–216 (TIQ), R226, K253, H263, and 302–304 (RLS). K333 carries the N6-acetyllysine modification. K341 is modified (N6-succinyllysine). S479 is modified (phosphoserine). An N6-succinyllysine modification is found at K593. At K600 the chain carries N6-acetyllysine. Residues 612-744 (RPRLLVAKMG…DDIEKCLAEK (133 aa)) enclose the B12-binding domain. An adenosylcob(III)alamin-binding site is contributed by H625.

The protein belongs to the methylmalonyl-CoA mutase family. Homodimer. Interacts (the apoenzyme form) with MMAA; the interaction is GTP dependent. It depends on adenosylcob(III)alamin as a cofactor.

It localises to the mitochondrion matrix. Its subcellular location is the mitochondrion. The protein resides in the cytoplasm. The enzyme catalyses (R)-methylmalonyl-CoA = succinyl-CoA. Inhibited by itaconyl-CoA, a metabolite that inactivates the coenzyme B12 cofactor. Functionally, catalyzes the reversible isomerization of methylmalonyl-CoA (MMCoA) (generated from branched-chain amino acid metabolism and degradation of dietary odd chain fatty acids and cholesterol) to succinyl-CoA (3-carboxypropionyl-CoA), a key intermediate of the tricarboxylic acid cycle. In Mus musculus (Mouse), this protein is Methylmalonyl-CoA mutase, mitochondrial (Mmut).